The primary structure comprises 556 residues: Glucose-6-phosphate isomerase (556 aa).

Glu360 acts as the Proton donor in catalysis. Catalysis depends on residues His391 and Lys519.

The protein belongs to the GPI family.

It localises to the cytoplasm. The enzyme catalyses alpha-D-glucose 6-phosphate = beta-D-fructose 6-phosphate. It participates in carbohydrate biosynthesis; gluconeogenesis. Its pathway is carbohydrate degradation; glycolysis; D-glyceraldehyde 3-phosphate and glycerone phosphate from D-glucose: step 2/4. Functionally, catalyzes the reversible isomerization of glucose-6-phosphate to fructose-6-phosphate. This is Glucose-6-phosphate isomerase from Acinetobacter baumannii (strain SDF).